The sequence spans 59 residues: MDKKLLEILVCPLCKGKLLFKKHELICKFDRLAFPVRDDIPVMLEQEARLIPLEEKDKL.

This sequence belongs to the UPF0434 family.

This Legionella pneumophila (strain Lens) protein is UPF0434 protein lpl1884.